A 685-amino-acid chain; its full sequence is Protein hook (685 aa).

The Calponin-homology (CH) domain occupies 6-122 (MEIYESLIRW…RLLQLILGCA (117 aa)). Residues 134-570 (QIMELEESLQ…LLAADSRYKK (437 aa)) are a coiled coil. 3 disordered regions span residues 430-449 (AAEDSESGNTMSKELHSSDV), 593-625 (LEKPSQDGEASSSSATGSGGDASTLTSTGSGRV), and 661-685 (PGQSFLSRQRQPAPRKPMNMPFAKK). The segment covering 602–623 (ASSSSATGSGGDASTLTSTGSG) has biased composition (low complexity). Residues 661-670 (PGQSFLSRQR) are compositionally biased toward polar residues.

This sequence belongs to the hook family. In terms of assembly, homodimer. Interacts with microtubules via its N-terminus.

The protein localises to the cytoplasm. Its subcellular location is the cytoskeleton. It is found in the endosome. Functionally, involved in endocytic trafficking. Probably acts as a cytoskeletal linker protein that tethers endosome vesicles to the cytoskeleton. The polypeptide is Protein hook (Aedes aegypti (Yellowfever mosquito)).